Consider the following 421-residue polypeptide: Testin (421 aa).

Positions Met-92–Asp-199 constitute a PET domain. A disordered region spans residues Glu-133 to Cys-164. Residues Pro-155–Cys-164 are compositionally biased toward basic and acidic residues. 3 LIM zinc-binding domains span residues Tyr-234–Glu-297, Pro-299–Val-359, and Gln-362–Ser-421.

It belongs to the prickle / espinas / testin family. In terms of assembly, interacts via LIM domain 1 with ZYX. Interacts (via LIM domain 3) with ENAH and VASP. Interacts with ALKBH4, talin, actin, alpha-actinin, GRIP1 and PXN. Interacts (via LIM domain 2) with ACTL7A (via N-terminus). Heterodimer with ACTL7A; the heterodimer interacts with ENAH to form a heterotrimer.

It is found in the cytoplasm. The protein resides in the cell junction. It localises to the focal adhesion. Its function is as follows. Scaffold protein that may play a role in cell adhesion, cell spreading and in the reorganization of the actin cytoskeleton. Plays a role in the regulation of cell proliferation. May act as a tumor suppressor. The protein is Testin (TES) of Canis lupus familiaris (Dog).